The sequence spans 252 residues: Accessory gland protein Acp32CD (252 aa).

The first 19 residues, 1–19 (MWRMRMRLLTGYLVLLALG), serve as a signal peptide directing secretion. Residues 42–252 (PDGEGGTGVD…GAKEDDYEEM (211 aa)) form a disordered region. Residues 44–69 (GEGGTGVDGGGGGAGGGAAGPGGGTG) are compositionally biased toward gly residues. 4 stretches are compositionally biased toward basic and acidic residues: residues 104 to 122 (AIGKKESGGGSDGKSDSKD), 142 to 153 (SDSKDAKDRQDK), 159 to 171 (QEGKRTDHSHHSS), and 209 to 225 (NGARESSQENQDAKEVA).

As to expression, seminal fluid.

It localises to the secreted. Responsible for physiological and behavioral changes in mated female flies. This is Accessory gland protein Acp32CD (Acp32CD) from Drosophila melanogaster (Fruit fly).